The following is a 178-amino-acid chain: Putative pre-16S rRNA nuclease (178 aa).

A compositionally biased stretch (basic and acidic residues) spans 1-18 (MDHAEQGPDRPGVDDPGR). The interval 1-21 (MDHAEQGPDRPGVDDPGRGRR) is disordered.

Belongs to the YqgF nuclease family.

It is found in the cytoplasm. Its function is as follows. Could be a nuclease involved in processing of the 5'-end of pre-16S rRNA. In Rhodococcus jostii (strain RHA1), this protein is Putative pre-16S rRNA nuclease.